Consider the following 118-residue polypeptide: Basic phospholipase A2 1 (118 aa).

Cystine bridges form between Cys11–Cys72, Cys26–Cys117, Cys28–Cys44, Cys43–Cys98, Cys50–Cys91, Cys60–Cys84, and Cys78–Cys89. Positions 27, 29, and 31 each coordinate Ca(2+). His47 is a catalytic residue. Asp48 contributes to the Ca(2+) binding site. The active site involves Asp92.

The protein belongs to the phospholipase A2 family. Group I subfamily. D49 sub-subfamily. Ca(2+) serves as cofactor. Expressed by the venom gland.

Its subcellular location is the secreted. The enzyme catalyses a 1,2-diacyl-sn-glycero-3-phosphocholine + H2O = a 1-acyl-sn-glycero-3-phosphocholine + a fatty acid + H(+). Functionally, PLA2 catalyzes the calcium-dependent hydrolysis of the 2-acyl groups in 3-sn-phosphoglycerides. The sequence is that of Basic phospholipase A2 1 from Naja melanoleuca (Forest cobra).